A 176-amino-acid chain; its full sequence is Large ribosomal subunit protein eL20 (176 aa).

Belongs to the eukaryotic ribosomal protein eL20 family. In terms of assembly, component of the large ribosomal subunit.

It localises to the cytoplasm. Component of the large ribosomal subunit. The ribosome is a large ribonucleoprotein complex responsible for the synthesis of proteins in the cell. In Salmo salar (Atlantic salmon), this protein is Large ribosomal subunit protein eL20 (rpl18a).